The chain runs to 79 residues: Translation initiation factor IF-1, chloroplastic (79 aa).

The S1-like domain maps to 1–74 (MTRKNIDLIE…HRGRITFRLR (74 aa)).

It belongs to the IF-1 family. Component of the 30S ribosomal translation pre-initiation complex which assembles on the 30S ribosome in the order IF-2 and IF-3, IF-1 and N-formylmethionyl-tRNA(fMet); mRNA recruitment can occur at any time during PIC assembly.

The protein resides in the plastid. The protein localises to the chloroplast. In terms of biological role, one of the essential components for the initiation of protein synthesis. Stabilizes the binding of IF-2 and IF-3 on the 30S subunit to which N-formylmethionyl-tRNA(fMet) subsequently binds. Helps modulate mRNA selection, yielding the 30S pre-initiation complex (PIC). Upon addition of the 50S ribosomal subunit IF-1, IF-2 and IF-3 are released leaving the mature 70S translation initiation complex. This is Translation initiation factor IF-1, chloroplastic from Chlorella vulgaris (Green alga).